The following is a 476-amino-acid chain: RuvB-like 1 (476 aa).

Positions 1 to 23 (MDMEVDEAISGTSSSRLAPIEEV) are disordered. ATP is bound at residue 89–96 (GPPATGKT).

It belongs to the RuvB family. Forms homohexameric rings. May form a dodecamer with ruvb-2 made of two stacked hexameric rings. In terms of tissue distribution, expressed in gonadal cells.

It is found in the cytoplasm. The protein resides in the nucleus. The enzyme catalyses ATP + H2O = ADP + phosphate + H(+). Functionally, possesses single-stranded DNA-stimulated ATPase and ATP dependent DNA helicase (3' to 5') activity suggesting a role in nuclear processes such as recombination and transcription. May participate in several chromatin remodeling complexes that mediate the ATP-dependent exchange of histones and remodel chromatin by shifting nucleosomes. Involvement in these complexes is likely required for transcriptional activation of selected genes and DNA repair in response to DNA damage. Involved in the Ce-Tor signaling pathway whereby it is required for the accumulation and localization of box C/D snoRNP to nucleoli to regulate ribosomal maturation and thus protein synthesis. Antagonizes the transcriptional activity of transcription factor pha-4, to control postembryonic development and adult longevity. Has a role in pharyngeal development. Has a role in gonadal development. The chain is RuvB-like 1 from Caenorhabditis elegans.